The sequence spans 914 residues: MRRLLLLLPLVVVAARMQIEWLWFNQFNLANVLLERWLLQVLLAGVAMLPLLAARAWSRQFRQQRLTSSQGISLRGWPYGIALLICAVVVLISALLTLDLLALAISDPFQLGDWQSNVWPHSRIGSVVKLVQVGGIGLAMTWLRLRPWLGRIVAASWVVVVSRTWGIWSLALWIPNESTKDPLLGADLSFGLGRFAGLHLALDLLLLGATFTLVFELWRVLASSQAISDWASPAFSPRQMRLIRLLSALLLFGAAGLVWLSRHQLLWTQHGLVAGAGWLQAHMTLPLRGFATLLLLLMGLALLLPCQRRLRQFLALALATLVMLETLATPLTRWLVVRPREFALQERYLKNAIEATQWGFQLDQIKSQVDDPSRFSPTDREEGASTLENVRIWDSGPLLEANRQLQQLRVYYRFSNAAVDRYPLNQDSDSSQQVIVSARELDQSALPRRSKTWQNRHFIFTHGYGFTVSPVNERRDDGLPSYFIKGLGTETKIAGNPALGIERSEVEKEIPVGDAALYYGMLPSPYAVAPTDIAEFDYPEGDINVMTHYQGSGGVPIGTWLQRCSAAVYLREPRLLFTNAINADSKLLIRRDVRSRVKAIAPFIDFRGEPYLISIPDAQQGSSNRINQNSNQRQQHQYWVVEGYTHSSTLAYSAAVSPDDSDRYLRNSVKAIVDAYNGSIRFFVSEPEDPIVNAWIRGFPDLFEPMQAMPLLVRDHRRVPEDFFNVQVNQLKRYHVDDPQIFYNGDDVWQVPSEIYGGQKINVEPYHITAQVQGNNNSEFLLLQPLTPLARPNLTAWLVARNDGDHYGELELIDFPKDKIILGPEQVQALIHQDPDVSEQFGLWDQDDLELVQGNLLVLPVGSGLLYVEPVYLRTRKVGLPSLARIVVSDGRLVAMDQDLNLALDQLMKKAPPV.

9 helical membrane-spanning segments follow: residues 4–24 (LLLL…WLWF), 37–57 (WLLQ…ARAW), 81–101 (IALL…LDLL), 123–143 (RIGS…MTWL), 152–172 (IVAA…SLAL), 195–215 (FAGL…TLVF), 240–260 (MRLI…LVWL), 285–305 (LPLR…LLLP), and 312–332 (QFLA…TPLT).

It belongs to the UPF0182 family.

The protein resides in the cell membrane. The polypeptide is UPF0182 protein Syncc9605_1323 (Synechococcus sp. (strain CC9605)).